The sequence spans 96 residues: (4S)-4-hydroxy-5-phosphonooxypentane-2,3-dione isomerase (96 aa).

The 90-residue stretch at 2-91 (HVTLVEINVH…MTGPRKKRLF (90 aa)) folds into the ABM domain.

This sequence belongs to the LsrG family. Homodimer.

Its subcellular location is the cytoplasm. It catalyses the reaction (2S)-2-hydroxy-3,4-dioxopentyl phosphate = 3-hydroxy-2,4-dioxopentyl phosphate. Functionally, involved in the degradation of phospho-AI-2, thereby terminating induction of the lsr operon and closing the AI-2 signaling cycle. Catalyzes the conversion of (4S)-4-hydroxy-5-phosphonooxypentane-2,3-dione (P-DPD) to 3-hydroxy-5-phosphonooxypentane-2,4-dione (P-HPD). The chain is (4S)-4-hydroxy-5-phosphonooxypentane-2,3-dione isomerase from Escherichia coli O157:H7.